The chain runs to 110 residues: Late cornified envelope protein 2C (110 aa).

Low complexity predominate over residues 1 to 10 (MSCQQNQQQC). Positions 1–23 (MSCQQNQQQCQPPPKCPPKCTPK) are disordered. Over residues 11–23 (QPPPKCPPKCTPK) the composition is skewed to pro residues.

This sequence belongs to the LCE family. Interacts with CYSRT1; the interaction is direct. In terms of tissue distribution, skin-specific. Expression was readily detected in adult trunk skin, adult arm skin, fetal skin, penal skin, vulva, esophagus and tongue. Not expressed in the cervix, rectum, lung, colon, or placenta.

Precursors of the cornified envelope of the stratum. This chain is Late cornified envelope protein 2C (LCE2C), found in Homo sapiens (Human).